The sequence spans 227 residues: Cytochrome c oxidase subunit 2 (227 aa).

Residues M1–S14 are Mitochondrial intermembrane-facing. Residues P15–M45 form a helical membrane-spanning segment. At L46 to Q59 the chain is on the mitochondrial matrix side. The chain crosses the membrane as a helical span at residues E60–M87. Over D88–L227 the chain is Mitochondrial intermembrane. Residues H161, C196, E198, C200, H204, and M207 each contribute to the Cu cation site. Residue E198 coordinates Mg(2+).

It belongs to the cytochrome c oxidase subunit 2 family. In terms of assembly, component of the cytochrome c oxidase (complex IV, CIV), a multisubunit enzyme composed of 14 subunits. The complex is composed of a catalytic core of 3 subunits MT-CO1, MT-CO2 and MT-CO3, encoded in the mitochondrial DNA, and 11 supernumerary subunits COX4I, COX5A, COX5B, COX6A, COX6B, COX6C, COX7A, COX7B, COX7C, COX8 and NDUFA4, which are encoded in the nuclear genome. The complex exists as a monomer or a dimer and forms supercomplexes (SCs) in the inner mitochondrial membrane with NADH-ubiquinone oxidoreductase (complex I, CI) and ubiquinol-cytochrome c oxidoreductase (cytochrome b-c1 complex, complex III, CIII), resulting in different assemblies (supercomplex SCI(1)III(2)IV(1) and megacomplex MCI(2)III(2)IV(2)). Found in a complex with TMEM177, COA6, COX18, COX20, SCO1 and SCO2. Interacts with TMEM177 in a COX20-dependent manner. Interacts with COX20. Interacts with COX16. It depends on Cu cation as a cofactor.

It is found in the mitochondrion inner membrane. It catalyses the reaction 4 Fe(II)-[cytochrome c] + O2 + 8 H(+)(in) = 4 Fe(III)-[cytochrome c] + 2 H2O + 4 H(+)(out). Functionally, component of the cytochrome c oxidase, the last enzyme in the mitochondrial electron transport chain which drives oxidative phosphorylation. The respiratory chain contains 3 multisubunit complexes succinate dehydrogenase (complex II, CII), ubiquinol-cytochrome c oxidoreductase (cytochrome b-c1 complex, complex III, CIII) and cytochrome c oxidase (complex IV, CIV), that cooperate to transfer electrons derived from NADH and succinate to molecular oxygen, creating an electrochemical gradient over the inner membrane that drives transmembrane transport and the ATP synthase. Cytochrome c oxidase is the component of the respiratory chain that catalyzes the reduction of oxygen to water. Electrons originating from reduced cytochrome c in the intermembrane space (IMS) are transferred via the dinuclear copper A center (CU(A)) of subunit 2 and heme A of subunit 1 to the active site in subunit 1, a binuclear center (BNC) formed by heme A3 and copper B (CU(B)). The BNC reduces molecular oxygen to 2 water molecules using 4 electrons from cytochrome c in the IMS and 4 protons from the mitochondrial matrix. This chain is Cytochrome c oxidase subunit 2 (MT-CO2), found in Balaenoptera physalus (Fin whale).